A 101-amino-acid polypeptide reads, in one-letter code: MAKGQSLQDPFLNALRRERVPVSIYLVNGIKLQGQIESFDQFVILLKNTVSQMVYKHAISTVVPSRPVSHHNNNPSGGSSNYHHGSTPASQPSQPESDDAE.

One can recognise a Sm domain in the interval 9–68 (DPFLNALRRERVPVSIYLVNGIKLQGQIESFDQFVILLKNTVSQMVYKHAISTVVPSRPV). The segment at 63 to 101 (VPSRPVSHHNNNPSGGSSNYHHGSTPASQPSQPESDDAE) is disordered. Residues 70–86 (HHNNNPSGGSSNYHHGS) are compositionally biased toward low complexity.

This sequence belongs to the Hfq family. In terms of assembly, homohexamer.

Functionally, RNA chaperone that binds small regulatory RNA (sRNAs) and mRNAs to facilitate mRNA translational regulation in response to envelope stress, environmental stress and changes in metabolite concentrations. Also binds with high specificity to tRNAs. This Sodalis glossinidius (strain morsitans) protein is RNA-binding protein Hfq.